Reading from the N-terminus, the 177-residue chain is Large ribosomal subunit protein uL6 (177 aa).

The protein belongs to the universal ribosomal protein uL6 family. Part of the 50S ribosomal subunit.

Functionally, this protein binds to the 23S rRNA, and is important in its secondary structure. It is located near the subunit interface in the base of the L7/L12 stalk, and near the tRNA binding site of the peptidyltransferase center. The polypeptide is Large ribosomal subunit protein uL6 (Polaromonas naphthalenivorans (strain CJ2)).